The primary structure comprises 37 residues: MNRLLQRQLFLENLLVGTNSMFHQISKHSINTCCRSL.

Belongs to the rotavirus A NSP6 family. As to quaternary structure, interacts with NSP2 and NSP5.

The protein localises to the host cytoplasm. Its subcellular location is the host mitochondrion. This Rotavirus A (strain RVA/Human/United States/D/1974/G1P1A[8]) (RV-A) protein is Non-structural protein 6.